We begin with the raw amino-acid sequence, 359 residues long: Histidinol-phosphate aminotransferase (359 aa).

Position 217 is an N6-(pyridoxal phosphate)lysine (lysine 217).

This sequence belongs to the class-II pyridoxal-phosphate-dependent aminotransferase family. Histidinol-phosphate aminotransferase subfamily. As to quaternary structure, homodimer. Pyridoxal 5'-phosphate serves as cofactor.

It carries out the reaction L-histidinol phosphate + 2-oxoglutarate = 3-(imidazol-4-yl)-2-oxopropyl phosphate + L-glutamate. It functions in the pathway amino-acid biosynthesis; L-histidine biosynthesis; L-histidine from 5-phospho-alpha-D-ribose 1-diphosphate: step 7/9. The chain is Histidinol-phosphate aminotransferase from Salmonella arizonae (strain ATCC BAA-731 / CDC346-86 / RSK2980).